The chain runs to 84 residues: Limulin (84 aa).

Residues 6 to 84 (ITSKVKFPPS…DEQGDFLFNV (79 aa)) form the Pentraxin (PTX) domain. Residues aspartate 67 and asparagine 68 each contribute to the Ca(2+) site.

Belongs to the pentraxin family. As to quaternary structure, homopentamer. Pentraxin (or pentaxin) have a discoid arrangement of 5 non-covalently bound subunits. Ca(2+) serves as cofactor. A disulfide bond links Cys-38 to a Cys in the C-terminal half of the chain of 163 residues.

In terms of biological role, lectin that binds sialic acid. Displays antiviral activity and therefore may contribute to defense against infections. This is Limulin from Limulus polyphemus (Atlantic horseshoe crab).